The chain runs to 184 residues: Acyl-homoserine-lactone synthase (184 aa).

Belongs to the autoinducer synthase family.

The catalysed reaction is a fatty acyl-[ACP] + S-adenosyl-L-methionine = an N-acyl-L-homoserine lactone + S-methyl-5'-thioadenosine + holo-[ACP] + H(+). In terms of biological role, involved in the synthesis of the acyl-homoserine lactone (AHL) signal N-(3-hydroxydodecanoyl)-L-HSL (3-hydroxy-C(12)-HSL or OH-dDHL). Required for normal biofilm development. This chain is Acyl-homoserine-lactone synthase, found in Acinetobacter baumannii.